The following is a 101-amino-acid chain: Small ribosomal subunit protein uS14 (101 aa).

The protein belongs to the universal ribosomal protein uS14 family. In terms of assembly, part of the 30S ribosomal subunit. Contacts proteins S3 and S10.

Its function is as follows. Binds 16S rRNA, required for the assembly of 30S particles and may also be responsible for determining the conformation of the 16S rRNA at the A site. The polypeptide is Small ribosomal subunit protein uS14 (Burkholderia mallei (strain NCTC 10247)).